The primary structure comprises 379 residues: Cytochrome b (379 aa).

A run of 4 helical transmembrane segments spans residues 33–53 (FGSLLGLCLISQIITGLFLAM), 77–98 (WLIRNLHANGASFFFICLYLHI), 113–133 (WNIGVVLFLLVMMTAFVGYVL), and 178–198 (FFAFHFLFPFVVAGATMIHLL). Residues histidine 83 and histidine 97 each coordinate heme b. Heme b-binding residues include histidine 182 and histidine 196. Histidine 201 serves as a coordination point for a ubiquinone. The next 4 helical transmembrane spans lie at 226-246 (YKDLLGFIIMLTALTMLALFY), 288-308 (LGGVLALLSSILVLMVVPILH), 320-340 (ASQLLFWILVADMLVLTWIGG), and 347-367 (YIIIGQVASVLYFSLFLVLNP).

Belongs to the cytochrome b family. In terms of assembly, the cytochrome bc1 complex contains 3 respiratory subunits (MT-CYB, CYC1 and UQCRFS1), 2 core proteins (UQCRC1 and UQCRC2) and probably 6 low-molecular weight proteins. Requires heme b as cofactor.

It localises to the mitochondrion inner membrane. Functionally, component of the ubiquinol-cytochrome c reductase complex (complex III or cytochrome b-c1 complex) that is part of the mitochondrial respiratory chain. The b-c1 complex mediates electron transfer from ubiquinol to cytochrome c. Contributes to the generation of a proton gradient across the mitochondrial membrane that is then used for ATP synthesis. The protein is Cytochrome b (mt-cyb) of Anguilla interioris (Highlands long-finned eel).